A 147-amino-acid chain; its full sequence is MTLRLNDLKPADGARTQRTRVGRGIGSGLGKTAGRGHKGSFARKGGGKIKAGFEGGQTPMQRRLPKIGFRSKMARDTAEVLSYQLDKLDAGDVDFVALRAANLVPSRAKKAKIVLKGELSKKFVLKGVAATAGAKAAIEAAGGSVEE.

Residues 1–12 are compositionally biased toward basic and acidic residues; that stretch reads MTLRLNDLKPAD. The segment at 1-61 is disordered; the sequence is MTLRLNDLKP…GFEGGQTPMQ (61 aa). The span at 23–33 shows a compositional bias: gly residues; the sequence is RGIGSGLGKTA. Residues 34-47 show a composition bias toward basic residues; it reads GRGHKGSFARKGGG.

Belongs to the universal ribosomal protein uL15 family. In terms of assembly, part of the 50S ribosomal subunit.

Binds to the 23S rRNA. The protein is Large ribosomal subunit protein uL15 of Xanthomonas oryzae pv. oryzae (strain MAFF 311018).